The chain runs to 588 residues: MARGGAGAEEASLRSNALSWLACGLLALLANAWIILSISAKQQKHKPLELLLCFLAGTHILMAAVPLTTFAVVQLRRQASSDYDWNESICKVFVSTYYTLALATCFTVASLSYHRMWMVRWPVNYRLSNAKKQALHAVMGIWMVSFILSTLPSIGWHNNGERYYARGCQFIVSKIGLGFGVCFSLLLLGGIVMGLVCVAITFYQTLWARPRRARQARRVGGGGGTKAGGPGALGTRPAFEVPAIVVEDARGKRRSSLDGSESAKTSLQVTNLVSAIVFLYDSLTGVPILVVSFFSLKSDSAPPWMVLAVLWCSMAQTLLLPSFIWSCERYRADVRTVWEQCVAIMSEEDGDDDGGCDDYAEGRVCKVRFDANGATGPGSRDPAQVKLLPGRHMLFPPLERVHYLQVPLSRRLSHDETNIFSTPREPGSFLHKWSSSDDIRVLPAQSRALGGPPEYLGQRHRLEDEEDEEEAEGGGLASLRQFLESGVLGSGGGPPRGPGFFREEITTFIDETPLPSPTASPGHSPRRPRPLGLSPRRLSLGSPESRAVGLPLGLSAGRRCSLTGGEESARAWGGSWGPGNPIFPQLTL.

Residues 1–17 are Extracellular-facing; it reads MARGGAGAEEASLRSNA. Residues 18-38 form a helical membrane-spanning segment; that stretch reads LSWLACGLLALLANAWIILSI. Residues 39–49 are Cytoplasmic-facing; sequence SAKQQKHKPLE. A helical membrane pass occupies residues 50 to 70; it reads LLLCFLAGTHILMAAVPLTTF. Residues 71 to 91 are Extracellular-facing; it reads AVVQLRRQASSDYDWNESICK. An N-linked (GlcNAc...) asparagine glycan is attached at asparagine 86. A helical membrane pass occupies residues 92–112; the sequence is VFVSTYYTLALATCFTVASLS. The Cytoplasmic portion of the chain corresponds to 113–133; that stretch reads YHRMWMVRWPVNYRLSNAKKQ. The chain crosses the membrane as a helical span at residues 134–154; that stretch reads ALHAVMGIWMVSFILSTLPSI. Over 155 to 174 the chain is Extracellular; the sequence is GWHNNGERYYARGCQFIVSK. Residues 175–195 traverse the membrane as a helical segment; sequence IGLGFGVCFSLLLLGGIVMGL. Topologically, residues 196 to 275 are cytoplasmic; that stretch reads VCVAITFYQT…SLQVTNLVSA (80 aa). A helical membrane pass occupies residues 276-296; the sequence is IVFLYDSLTGVPILVVSFFSL. Topologically, residues 297 to 303 are extracellular; sequence KSDSAPP. Residues 304-324 traverse the membrane as a helical segment; that stretch reads WMVLAVLWCSMAQTLLLPSFI. Topologically, residues 325–588 are cytoplasmic; it reads WSCERYRADV…GNPIFPQLTL (264 aa). Phosphoserine is present on residues serine 413 and serine 435. 2 disordered regions span residues 445–474 and 511–550; these read QSRALGGPPEYLGQRHRLEDEEDEEEAEGG and ETPLPSPTASPGHSPRRPRPLGLSPRRLSLGSPESRAVGL. Over residues 530 to 546 the composition is skewed to low complexity; the sequence is PLGLSPRRLSLGSPESR.

The protein belongs to the G-protein coupled receptor 1 family.

It is found in the cell membrane. Functionally, orphan receptor. This Homo sapiens (Human) protein is Probable G-protein coupled receptor 162 (GPR162).